The sequence spans 206 residues: Ras-related protein Rab7 (206 aa).

GTP contacts are provided by residues 15–22 (GDSGVGKT), 63–67 (DTAGQ), and 125–128 (NKVD). S-geranylgeranyl cysteine attachment occurs at residues C205 and C206.

This sequence belongs to the small GTPase superfamily. Rab family.

The protein resides in the cell membrane. Functionally, protein transport. Probably involved in vesicular traffic. The chain is Ras-related protein Rab7 from Cenchrus ciliaris (Buffelgrass).